The primary structure comprises 293 residues: 4-hydroxy-tetrahydrodipicolinate synthase (293 aa).

Pyruvate is bound at residue T47. The active-site Proton donor/acceptor is Y136. The active-site Schiff-base intermediate with substrate is the K164. I206 is a pyruvate binding site.

Belongs to the DapA family. As to quaternary structure, homotetramer; dimer of dimers.

The protein resides in the cytoplasm. The enzyme catalyses L-aspartate 4-semialdehyde + pyruvate = (2S,4S)-4-hydroxy-2,3,4,5-tetrahydrodipicolinate + H2O + H(+). Its pathway is amino-acid biosynthesis; L-lysine biosynthesis via DAP pathway; (S)-tetrahydrodipicolinate from L-aspartate: step 3/4. In terms of biological role, catalyzes the condensation of (S)-aspartate-beta-semialdehyde [(S)-ASA] and pyruvate to 4-hydroxy-tetrahydrodipicolinate (HTPA). This chain is 4-hydroxy-tetrahydrodipicolinate synthase, found in Listeria innocua serovar 6a (strain ATCC BAA-680 / CLIP 11262).